The sequence spans 397 residues: LIM/homeobox protein Lhx9 (397 aa).

Residues 40-60 (RSKTESRLAKGGQMNGRETNM) form a disordered region. 2 LIM zinc-binding domains span residues 69–130 (ALCA…RFSV) and 131–193 (QRCA…LLQG). The segment at residues 267-326 (TKRMATSFKHHQLRTMKSYFAINHNPDAKDLKQLAQKTGLTKRVLQVWFQNARAKFRRNL) is a DNA-binding region (homeobox). Disordered regions lie at residues 330-363 (ENGG…TTLT) and 378-397 (SNLD…TNLF). The segment covering 353-363 (LTPPGTATTLT) has biased composition (low complexity). A compositionally biased stretch (polar residues) spans 387-397 (SPSQTTLTNLF).

The protein resides in the nucleus. May be involved in gonadal development. This chain is LIM/homeobox protein Lhx9 (LHX9), found in Gallus gallus (Chicken).